Here is a 150-residue protein sequence, read N- to C-terminus: Large ribosomal subunit protein bL9 (150 aa).

It belongs to the bacterial ribosomal protein bL9 family.

Binds to the 23S rRNA. The polypeptide is Large ribosomal subunit protein bL9 (Corynebacterium efficiens (strain DSM 44549 / YS-314 / AJ 12310 / JCM 11189 / NBRC 100395)).